The chain runs to 50 residues: uncharacterized protein (50 aa).

This is an uncharacterized protein from Bacillus subtilis (strain 168).